We begin with the raw amino-acid sequence, 253 residues long: 5'/3'-nucleotidase SurE (253 aa).

Residues aspartate 8, aspartate 9, serine 39, and asparagine 92 each contribute to the a divalent metal cation site.

The protein belongs to the SurE nucleotidase family. A divalent metal cation is required as a cofactor.

The protein resides in the cytoplasm. The catalysed reaction is a ribonucleoside 5'-phosphate + H2O = a ribonucleoside + phosphate. It catalyses the reaction a ribonucleoside 3'-phosphate + H2O = a ribonucleoside + phosphate. It carries out the reaction [phosphate](n) + H2O = [phosphate](n-1) + phosphate + H(+). In terms of biological role, nucleotidase with a broad substrate specificity as it can dephosphorylate various ribo- and deoxyribonucleoside 5'-monophosphates and ribonucleoside 3'-monophosphates with highest affinity to 3'-AMP. Also hydrolyzes polyphosphate (exopolyphosphatase activity) with the preference for short-chain-length substrates (P20-25). Might be involved in the regulation of dNTP and NTP pools, and in the turnover of 3'-mononucleotides produced by numerous intracellular RNases (T1, T2, and F) during the degradation of various RNAs. The chain is 5'/3'-nucleotidase SurE from Citrobacter koseri (strain ATCC BAA-895 / CDC 4225-83 / SGSC4696).